A 251-amino-acid chain; its full sequence is DNA repair protein RecO (251 aa).

This sequence belongs to the RecO family.

Functionally, involved in DNA repair and RecF pathway recombination. The polypeptide is DNA repair protein RecO (Albidiferax ferrireducens (strain ATCC BAA-621 / DSM 15236 / T118) (Rhodoferax ferrireducens)).